Consider the following 287-residue polypeptide: S-methyl-5'-thioadenosine phosphorylase (287 aa).

Phosphate contacts are provided by residues Thr-13 and 55 to 56; that span reads RH. Met-186 contributes to the substrate binding site. Thr-187 lines the phosphate pocket. 210-212 serves as a coordination point for substrate; sequence DYD.

This sequence belongs to the PNP/MTAP phosphorylase family. MTAP subfamily. In terms of assembly, homohexamer. Dimer of a homotrimer.

The enzyme catalyses S-methyl-5'-thioadenosine + phosphate = 5-(methylsulfanyl)-alpha-D-ribose 1-phosphate + adenine. It functions in the pathway amino-acid biosynthesis; L-methionine biosynthesis via salvage pathway; S-methyl-5-thio-alpha-D-ribose 1-phosphate from S-methyl-5'-thioadenosine (phosphorylase route): step 1/1. Catalyzes the reversible phosphorylation of S-methyl-5'-thioadenosine (MTA) to adenine and 5-methylthioribose-1-phosphate. Involved in the breakdown of MTA, a major by-product of polyamine biosynthesis. Responsible for the first step in the methionine salvage pathway after MTA has been generated from S-adenosylmethionine. Has broad substrate specificity with 6-aminopurine nucleosides as preferred substrates. This is S-methyl-5'-thioadenosine phosphorylase from Leptospira interrogans serogroup Icterohaemorrhagiae serovar Lai (strain 56601).